The primary structure comprises 119 residues: UPF0102 protein Pmen_0910 (119 aa).

Belongs to the UPF0102 family.

The polypeptide is UPF0102 protein Pmen_0910 (Ectopseudomonas mendocina (strain ymp) (Pseudomonas mendocina)).